We begin with the raw amino-acid sequence, 233 residues long: Putative N-acetylmannosamine-6-phosphate 2-epimerase (233 aa).

It belongs to the NanE family.

It carries out the reaction an N-acyl-D-glucosamine 6-phosphate = an N-acyl-D-mannosamine 6-phosphate. It participates in amino-sugar metabolism; N-acetylneuraminate degradation; D-fructose 6-phosphate from N-acetylneuraminate: step 3/5. Functionally, converts N-acetylmannosamine-6-phosphate (ManNAc-6-P) to N-acetylglucosamine-6-phosphate (GlcNAc-6-P). In Yersinia pseudotuberculosis serotype IB (strain PB1/+), this protein is Putative N-acetylmannosamine-6-phosphate 2-epimerase.